The sequence spans 100 residues: Small ribosomal subunit protein uS14c (100 aa).

It belongs to the universal ribosomal protein uS14 family. Part of the 30S ribosomal subunit.

Its subcellular location is the plastid. It is found in the chloroplast. Its function is as follows. Binds 16S rRNA, required for the assembly of 30S particles. This chain is Small ribosomal subunit protein uS14c, found in Porphyra purpurea (Red seaweed).